The primary structure comprises 291 residues: Bis(5'-nucleosyl)-tetraphosphatase, symmetrical (291 aa).

The protein belongs to the Ap4A hydrolase family.

The catalysed reaction is P(1),P(4)-bis(5'-adenosyl) tetraphosphate + H2O = 2 ADP + 2 H(+). In terms of biological role, hydrolyzes diadenosine 5',5'''-P1,P4-tetraphosphate to yield ADP. This Coxiella burnetii (strain CbuG_Q212) (Coxiella burnetii (strain Q212)) protein is Bis(5'-nucleosyl)-tetraphosphatase, symmetrical.